A 346-amino-acid polypeptide reads, in one-letter code: Dihydroorotase (346 aa).

Residues His-14 and His-16 each coordinate Zn(2+). Substrate is bound by residues 16 to 18 and Asn-42; that span reads HLR. Zn(2+) contacts are provided by Lys-100, His-137, and His-175. N6-carboxylysine is present on Lys-100. A substrate-binding site is contributed by His-137. Substrate is bound at residue Leu-220. Residue Asp-248 coordinates Zn(2+). Asp-248 is an active-site residue. 2 residues coordinate substrate: His-252 and Ala-264.

Belongs to the metallo-dependent hydrolases superfamily. DHOase family. Class II DHOase subfamily. Homodimer. Zn(2+) is required as a cofactor.

The enzyme catalyses (S)-dihydroorotate + H2O = N-carbamoyl-L-aspartate + H(+). Its pathway is pyrimidine metabolism; UMP biosynthesis via de novo pathway; (S)-dihydroorotate from bicarbonate: step 3/3. Its function is as follows. Catalyzes the reversible cyclization of carbamoyl aspartate to dihydroorotate. The polypeptide is Dihydroorotase (Cereibacter sphaeroides (strain ATCC 17025 / ATH 2.4.3) (Rhodobacter sphaeroides)).